The sequence spans 704 residues: Tetratricopeptide repeat protein 12 (704 aa).

Thr71 carries the post-translational modification Phosphothreonine. 3 TPR repeats span residues 105–138 (ADAL…LKDM), 139–172 (KVLY…DENC), and 173–206 (TKAY…NPKL).

The protein resides in the cytoplasm. In terms of biological role, cytoplasmic protein that plays a role in the proper assembly of dynein arm complexes in motile cilia in both respiratory cells and sperm flagella. In Mus musculus (Mouse), this protein is Tetratricopeptide repeat protein 12 (Ttc12).